We begin with the raw amino-acid sequence, 283 residues long: 4-diphosphocytidyl-2-C-methyl-D-erythritol kinase (283 aa).

Residue lysine 10 is part of the active site. 99–109 (PMGGGLGGGSS) provides a ligand contact to ATP. Residue aspartate 141 is part of the active site.

This sequence belongs to the GHMP kinase family. IspE subfamily. Homodimer.

It carries out the reaction 4-CDP-2-C-methyl-D-erythritol + ATP = 4-CDP-2-C-methyl-D-erythritol 2-phosphate + ADP + H(+). It functions in the pathway isoprenoid biosynthesis; isopentenyl diphosphate biosynthesis via DXP pathway; isopentenyl diphosphate from 1-deoxy-D-xylulose 5-phosphate: step 3/6. Catalyzes the phosphorylation of the position 2 hydroxy group of 4-diphosphocytidyl-2C-methyl-D-erythritol. The protein is 4-diphosphocytidyl-2-C-methyl-D-erythritol kinase of Salmonella enteritidis PT4 (strain P125109).